The sequence spans 363 residues: 3-dehydroquinate synthase (363 aa).

NAD(+) is bound by residues 71 to 76 (DGEQYK), 105 to 109 (GVIGD), 129 to 130 (TT), Lys142, Lys151, and 169 to 172 (CLKT). Residues Glu184, His247, and His264 each coordinate Zn(2+).

This sequence belongs to the sugar phosphate cyclases superfamily. Dehydroquinate synthase family. It depends on NAD(+) as a cofactor. Requires Co(2+) as cofactor. Zn(2+) serves as cofactor.

Its subcellular location is the cytoplasm. It carries out the reaction 7-phospho-2-dehydro-3-deoxy-D-arabino-heptonate = 3-dehydroquinate + phosphate. The protein operates within metabolic intermediate biosynthesis; chorismate biosynthesis; chorismate from D-erythrose 4-phosphate and phosphoenolpyruvate: step 2/7. Its function is as follows. Catalyzes the conversion of 3-deoxy-D-arabino-heptulosonate 7-phosphate (DAHP) to dehydroquinate (DHQ). The chain is 3-dehydroquinate synthase from Vibrio vulnificus (strain CMCP6).